A 193-amino-acid chain; its full sequence is Peptidyl-tRNA hydrolase 1 (193 aa).

Y27 serves as a coordination point for tRNA. The active-site Proton acceptor is the H32. TRNA is bound by residues F80, N82, and N128.

This sequence belongs to the PTH family. Monomer.

It is found in the cytoplasm. The enzyme catalyses an N-acyl-L-alpha-aminoacyl-tRNA + H2O = an N-acyl-L-amino acid + a tRNA + H(+). Its function is as follows. Hydrolyzes ribosome-free peptidyl-tRNAs (with 1 or more amino acids incorporated), which drop off the ribosome during protein synthesis, or as a result of ribosome stalling. In terms of biological role, catalyzes the release of premature peptidyl moieties from peptidyl-tRNA molecules trapped in stalled 50S ribosomal subunits, and thus maintains levels of free tRNAs and 50S ribosomes. In Corynebacterium jeikeium (strain K411), this protein is Peptidyl-tRNA hydrolase 1.